Consider the following 313-residue polypeptide: Olfactory receptor 4E2 (313 aa).

The Extracellular segment spans residues 1-25 (MDSLNQTRVTEFVFLGLTDNRVLEM). The N-linked (GlcNAc...) asparagine glycan is linked to N5. Residues 26–49 (LFFMAFSAIYMLTLSGNILIIIAT) traverse the membrane as a helical segment. The Cytoplasmic segment spans residues 50–57 (VFTPSLHT). The chain crosses the membrane as a helical span at residues 58–79 (PMYFFLSNLSFIDICHSSVTVP). At 80–100 (KMLEGLLLERKTISFDNCITQ) the chain is on the extracellular side. C97 and C179 are oxidised to a cystine. Residues 101–120 (LFFLHLFACAEIFLLIIVAY) traverse the membrane as a helical segment. Residues H105 and C109 each coordinate Cu cation. The Cytoplasmic segment spans residues 121-139 (DRYVAICTPLHYPNVMNMR). Residues 140-158 (VCIQLVFALWLGGTVHSLG) traverse the membrane as a helical segment. Residues 159–195 (QTFLTIRLPYCGPNIIDSYFCDVPLVIKLACTDTYLT) lie on the Extracellular side of the membrane. The helical transmembrane segment at 196 to 219 (GILIVTNSGTISLSCFLAVVTSYM) threads the bilayer. Over 220–235 (VILVSLRKHSAEGRQK) the chain is Cytoplasmic. Residues 236-258 (ALSTCSAHFMVVALFFGPCIFIY) traverse the membrane as a helical segment. The Extracellular segment spans residues 259 to 269 (TRPDTSFSIDK). R260 provides a ligand contact to Cu cation. The chain crosses the membrane as a helical span at residues 270–289 (VVSVFYTVVTPLLNPFIYTL). The Cytoplasmic segment spans residues 290–313 (RNEEVKSAMKQLRQRQVFFTKSYT).

This sequence belongs to the G-protein coupled receptor 1 family.

Its subcellular location is the cell membrane. With respect to regulation, copper binding enhances receptor activity in response to odorant binding. Olfactory receptor that is activated by the binding of organosulfur odorants with thioether groups such as (methylthio)methanethiol (MTMT) and bis(methylthiomethyl) disulfide. Also binds odorants cis-cyclooctene and tert-butyl mercaptan. The activity of this receptor is mediated by G proteins which activate adenylyl cyclase. The polypeptide is Olfactory receptor 4E2 (Homo sapiens (Human)).